We begin with the raw amino-acid sequence, 464 residues long: Protein FAM90A7 (464 aa).

Disordered stretches follow at residues 1–42 (MMAR…DPRL), 69–387 (VPAT…AGHD), and 410–437 (AAPS…SEAP). Composition is skewed to basic and acidic residues over residues 74–89 (GKKE…KPRA) and 97–111 (NKDK…RQQD). Over residues 180–197 (LASLSPLRKASLSSSSSL) the composition is skewed to low complexity.

Belongs to the FAM90 family.

The protein is Protein FAM90A7 of Homo sapiens (Human).